The following is a 395-amino-acid chain: MNNMPTIKHVRAFTVRGGGADYHDQGSGHWIDDHISTPMGRYPEYRQSRQSFGINVLGTLVVEIEASDGTVGFSVTTGGELGCWIVEKHLARFIEGAKVTDIEKIWDQMFNATLYYGRKGIVLNTISGVDLALWDLLAKVRKEPVHALLGGPVRDELTFYATGARPDLAKKMGFIGGKLPLHHGPAEREEGLKKNLELLGEMRQRVGDDFWLMYDCWMSLDVEYATRLANAASEYKLKWIEEALPPDDYWGYAELRRNVPRGMLVTTGEHEATRWGFRMLLEMECCDILQPDVGWCGGITELLKISALADAHGKLVVPHGSSVYSYHFVITRHNSPFSEFLMMAPKADEVVPMFNPMLLDEPVPVNGRMKASALDAPGFGVRLNPECALQRPFPR.

Positions 23 and 49 each coordinate substrate. Asp215, Glu241, and Glu269 together coordinate Mg(2+). His319 (proton acceptor) is an active-site residue. Substrate is bound at residue Glu339.

It belongs to the mandelate racemase/muconate lactonizing enzyme family. RhamD subfamily. Homooctamer; tetramer of dimers. Mg(2+) is required as a cofactor.

The enzyme catalyses L-rhamnonate = 2-dehydro-3-deoxy-L-rhamnonate + H2O. In terms of biological role, catalyzes the dehydration of L-rhamnonate to 2-keto-3-deoxy-L-rhamnonate (KDR). This chain is L-rhamnonate dehydratase (rhmD), found in Polaromonas sp. (strain JS666 / ATCC BAA-500).